A 450-amino-acid polypeptide reads, in one-letter code: tRNA (guanine-N(7)-)-methyltransferase non-catalytic subunit TRM82 (450 aa).

Basic and acidic residues predominate over residues 69–82; the sequence is AAKKLKTNEGEAIE. Residues 69–103 form a disordered region; it reads AAKKLKTNEGEAIERPGNQRRVPLPGKDPKVPVPG. 3 WD repeats span residues 108–147, 200–241, and 245–285; these read PVYQ…KDNC, GHVS…VIDK, and GHKE…LMSS.

Belongs to the WD repeat TRM82 family. In terms of assembly, forms a heterodimer with the catalytic subunit TRM8.

Its subcellular location is the nucleus. Its pathway is tRNA modification; N(7)-methylguanine-tRNA biosynthesis. In terms of biological role, required for the formation of N(7)-methylguanine at position 46 (m7G46) in tRNA. In the complex, it is required to stabilize and induce conformational changes of the catalytic subunit. The protein is tRNA (guanine-N(7)-)-methyltransferase non-catalytic subunit TRM82 of Eremothecium gossypii (strain ATCC 10895 / CBS 109.51 / FGSC 9923 / NRRL Y-1056) (Yeast).